Here is a 211-residue protein sequence, read N- to C-terminus: Endo-1,4-beta-xylanase 4 (211 aa).

Positions 1–16 (MKVTAAFAGLLVTAFA) are cleaved as a signal peptide. The GH11 domain maps to 19–210 (VPEPVLVSRS…GACSASVTIS (192 aa)). N101 is a glycosylation site (N-linked (GlcNAc...) asparagine). Residue E106 is the Nucleophile of the active site. E197 functions as the Proton donor in the catalytic mechanism.

It belongs to the glycosyl hydrolase 11 (cellulase G) family.

It is found in the secreted. It catalyses the reaction Endohydrolysis of (1-&gt;4)-beta-D-xylosidic linkages in xylans.. It participates in glycan degradation; xylan degradation. In terms of biological role, endo-1,4-beta-xylanase involved in the hydrolysis of xylan, a major structural heterogeneous polysaccharide found in plant biomass representing the second most abundant polysaccharide in the biosphere, after cellulose. The polypeptide is Endo-1,4-beta-xylanase 4 (XYN4) (Aspergillus niger).